The following is a 165-amino-acid chain: MASTSSFDVVSDFDRQELVNTLDQVRRDVGNRYDLKDSNTEIQLEETELVITTASDMTLQAVEDVLRAKATKRNLSLKIFDFQTPESVGGNRVKQVVKLRKGLSQEIAKKLSKIVRDELKKVTVAIQGESVRITGKSKDDLQAAIQLVKSKEDELDVPLQFENYR.

The protein belongs to the YajQ family.

Functionally, nucleotide-binding protein. The sequence is that of Nucleotide-binding protein SYNW1816 from Parasynechococcus marenigrum (strain WH8102).